Here is a 617-residue protein sequence, read N- to C-terminus: Hemagglutinin glycoprotein (617 aa).

Residues 1–37 lie on the Intravirion side of the membrane; the sequence is MSPQRDRINAFYKDNPHPKGSRIVINREHLMIDRPYV. Residues 1 to 154 form a stalk region; that stretch reads MSPQRDRINA…RIKLDYDQYC (154 aa). A helical; Signal-anchor for type II membrane protein transmembrane segment spans residues 38 to 58; sequence LLAVLFVMFLSLIGLLAIAGI. Over 59-617 the chain is Virion surface; it reads RLHRAAIYTA…VTREDGTNRR (559 aa). Residues asparagine 168, asparagine 187, asparagine 200, asparagine 215, and asparagine 238 are each glycosylated (N-linked (GlcNAc...) asparagine; by host). Disulfide bonds link cysteine 188–cysteine 606, cysteine 287–cysteine 300, cysteine 381–cysteine 494, cysteine 386–cysteine 394, and cysteine 570–cysteine 579. Positions 458-543 are interaction with host NECTIN4 receptor; the sequence is PMKNLALGVI…VEHAVVYYVY (86 aa).

The protein belongs to the paramyxoviruses hemagglutinin-neuraminidase family. Non-sialidase subfamily. As to quaternary structure, homodimer; disulfide-linked. Further forms homotetramer (dimer of dimers). Interacts (via C-terminus) with human NECTIN4 (via N-terminus); this interaction allows attachment to the respiratory epithelium and viral entry. Interacts (via C-terminus) with human SLAMF1/CD150 (via N-terminus); this interaction allows attachment and viral entry into the CD150-expressing immune cells. Interacts with human CD46 antigen; this interaction allows attachment and viral entry of vaccine and laboratory-adapted strains.

It is found in the virion membrane. The protein resides in the host cell membrane. Attaches the virus to the human SLAMF1/CD150 receptor for entry into host dendritic cells, macrophages, activated memory T cells and naive or memory B cells, thereby explaining the long immunosuppression that follows infection. In the respiratory airways, binds to the NECTIN4 receptor for entry into the host cell. Binding of H protein to the receptor induces a conformational change that allows the F protein to trigger virion/cell membranes fusion. The vaccine and laboratory-adapted strains use host CD46 as an alternate receptor. The high degree of interaction between H and CD46 results in down-regulation of the latter from the surface of infected cells, rendering them more sensitive to c3b-mediated complement lysis. The sequence is that of Hemagglutinin glycoprotein (H) from Homo sapiens (Human).